The primary structure comprises 96 residues: Accessory cholera enterotoxin (96 aa).

Residues 76–96 (QALAIVLQALMTRFALRALNL) traverse the membrane as a helical segment.

The protein localises to the secreted. The protein resides in the host cell membrane. Increases short-circuit current in rabbit ileal tissue mounted in Ussing chambers, by increasing the potential difference. Cultures of V.cholerae containing the cloned ace gene cause fluid secretion in ligated rabbit ileal loops. The protein is Accessory cholera enterotoxin (ace) of Vibrio cholerae serotype O1 (strain ATCC 39315 / El Tor Inaba N16961).